A 163-amino-acid chain; its full sequence is MASLSQAVNSLFLKEFVGAIFLTMRHFFKQKATINYPFEKGPVSPRFRGEHALRRYPNGEERCIACKLCEAICPAQAITIEAGPRRNDGTRRTVRYDIDMVKCIYCGFCQEACPVDAIVEGPNFEFATETREELYFDKQRLLDNGDRWEREIARNLALDAPYR.

4Fe-4S ferredoxin-type domains follow at residues 53–83 (LRRY…IEAG) and 94–123 (VRYD…EGPN). Residues cysteine 63, cysteine 66, cysteine 69, cysteine 73, cysteine 103, cysteine 106, cysteine 109, and cysteine 113 each coordinate [4Fe-4S] cluster.

Belongs to the complex I 23 kDa subunit family. As to quaternary structure, NDH-1 is composed of 14 different subunits. Subunits NuoA, H, J, K, L, M, N constitute the membrane sector of the complex. [4Fe-4S] cluster is required as a cofactor.

It localises to the cell inner membrane. It carries out the reaction a quinone + NADH + 5 H(+)(in) = a quinol + NAD(+) + 4 H(+)(out). In terms of biological role, NDH-1 shuttles electrons from NADH, via FMN and iron-sulfur (Fe-S) centers, to quinones in the respiratory chain. The immediate electron acceptor for the enzyme in this species is believed to be ubiquinone. Couples the redox reaction to proton translocation (for every two electrons transferred, four hydrogen ions are translocated across the cytoplasmic membrane), and thus conserves the redox energy in a proton gradient. This chain is NADH-quinone oxidoreductase subunit I, found in Agrobacterium fabrum (strain C58 / ATCC 33970) (Agrobacterium tumefaciens (strain C58)).